We begin with the raw amino-acid sequence, 415 residues long: Lupus La protein homolog (415 aa).

The HTH La-type RNA-binding domain maps to 7 to 99 (NEKMTALEAK…RRSPSRPLPE (93 aa)). Phosphoserine occurs at positions 92 and 94. The region spanning 111–187 (RSVYIKGFPT…TNLLILFKED (77 aa)) is the RRM domain. At Lys116 the chain carries N6-acetyllysine. At Thr120 the chain carries Phosphothreonine. N6-acetyllysine occurs at positions 128, 327, and 356. The 121-residue stretch at 226–346 (EGKMGCLLKF…GRFKGSHVFT (121 aa)) folds into the xRRM domain. A disordered region spans residues 349 to 415 (RRFKGKGKGN…KKRENGARDK (67 aa)). Thr377 is modified (phosphothreonine). Residues 377–415 (TRFDDDDRRRGPMKRGRDGRDREEPASKHKKRENGARDK) are compositionally biased toward basic and acidic residues.

As to quaternary structure, interacts with DDX15. May interact with RUFY1. Phosphorylated.

The protein localises to the nucleus. Binds to the 3' poly(U) terminus of nascent RNA polymerase III transcripts, protecting them from exonuclease digestion and facilitating their folding and maturation. The chain is Lupus La protein homolog (Ssb) from Mus musculus (Mouse).